We begin with the raw amino-acid sequence, 118 residues long: Small ribosomal subunit protein uS13 (118 aa).

The tract at residues 97 to 118 (VRGQRTKTNARTCKGPRKAIKK) is disordered.

Belongs to the universal ribosomal protein uS13 family. Part of the 30S ribosomal subunit. Forms a loose heterodimer with protein S19. Forms two bridges to the 50S subunit in the 70S ribosome.

Functionally, located at the top of the head of the 30S subunit, it contacts several helices of the 16S rRNA. In the 70S ribosome it contacts the 23S rRNA (bridge B1a) and protein L5 of the 50S subunit (bridge B1b), connecting the 2 subunits; these bridges are implicated in subunit movement. Contacts the tRNAs in the A and P-sites. The sequence is that of Small ribosomal subunit protein uS13 from Buchnera aphidicola subsp. Schizaphis graminum (strain Sg).